Reading from the N-terminus, the 209-residue chain is Large ribosomal subunit protein uL3 (209 aa).

Positions 125 to 148 (RHGQSRGPMAHGSRYHRRPGSMGP) are disordered.

The protein belongs to the universal ribosomal protein uL3 family. Part of the 50S ribosomal subunit. Forms a cluster with proteins L14 and L19.

Functionally, one of the primary rRNA binding proteins, it binds directly near the 3'-end of the 23S rRNA, where it nucleates assembly of the 50S subunit. The chain is Large ribosomal subunit protein uL3 from Lysinibacillus sphaericus (strain C3-41).